A 198-amino-acid chain; its full sequence is Chromophore lyase CpcS/CpeS 2 (198 aa).

The protein belongs to the CpcS/CpeS biliprotein lyase family.

It is found in the plastid. The protein localises to the organellar chromatophore. In terms of biological role, covalently attaches a chromophore to Cys residue(s) of phycobiliproteins. The protein is Chromophore lyase CpcS/CpeS 2 of Paulinella chromatophora.